A 172-amino-acid chain; its full sequence is Myosin regulatory light chain RLC-A (172 aa).

Positions 1–16 (MSSKRAKTKTTKKRPQ) are enriched in basic residues. The disordered stretch occupies residues 1–20 (MSSKRAKTKTTKKRPQRATS). Thr-19 is subject to Phosphothreonine; by MLCK. Phosphoserine; by MLCK is present on Ser-20. EF-hand domains are found at residues 29–64 (SQIQ…MGKN), 98–133 (DPED…MGDR), and 134–169 (FTDE…GAKD). Ca(2+)-binding residues include Asp-42, Asn-44, Asp-46, and Asp-53.

Myosin is a hexamer of 2 heavy chains and 4 light chains. Post-translationally, phosphorylation increases the actin-activated myosin ATPase activity and thereby regulates the contractile activity.

In terms of biological role, myosin regulatory subunit that plays an important role in regulation of both smooth muscle and nonmuscle cell contractile activity via its phosphorylation. Implicated in cytokinesis, receptor capping, and cell locomotion. The protein is Myosin regulatory light chain RLC-A (Rlc-a) of Rattus norvegicus (Rat).